The following is a 1581-amino-acid chain: Mediator of RNA polymerase II transcription subunit 1 (1581 aa).

An interaction with the Mediator complex and THRA region spans residues 1–670 (MKAQGETEES…YGSSPLERQN (670 aa)). The segment at 16–590 (MSSLLERLHA…SIKDRHESVG (575 aa)) is interaction with ESR1. Interaction with the Mediator complex stretches follow at residues 108–212 (FYVE…GYLT) and 215–390 (SGGH…SLQG). The tract at residues 405–644 (PLILNLIRHQ…MAGNTKNHPM (240 aa)) is interaction with THRA. An interaction with VDR region spans residues 542–789 (PASSPGYGMT…TDILSDIAEE (248 aa)). Residue serine 588 is modified to Phosphoserine. The LXXLL motif 1 signature appears at 604–608 (LTSLL). Disordered regions lie at residues 609 to 705 (QITG…HQTE), 792 to 820 (KLPS…QSTL), 874 to 893 (SQSG…GDND), and 948 to 1566 (EHHS…DFMI). Positions 622–632 (PTPPHHTPPPV) are enriched in pro residues. The tract at residues 622 to 701 (PTPPHHTPPP…SSRLPPEKPK (80 aa)) is interaction with PPARGC1A and THRA. An LXXLL motif 2 motif is present at residues 645-649 (LMNLL). The segment covering 655–675 (QDFSTLYGSSPLERQNSSSGS) has biased composition (polar residues). Residues 656-1066 (DFSTLYGSSP…TPPIPKITIQ (411 aa)) are interaction with ESR1. Serine 664 carries the phosphoserine modification. The segment at 681 to 715 (CSGSNKTKKKKSSRLPPEKPKHQTEDDFQRELFSM) is interaction with GATA1. Basic and acidic residues predominate over residues 696–705 (PPEKPKHQTE). Serine 795 is modified (phosphoserine). Threonine 805 is subject to Phosphothreonine. The segment covering 808–820 (RDSSSSGHSQSTL) has biased composition (polar residues). The Integrase domain-binding motif (IBM) motif lies at 875 to 902 (QSGFGEEYFDESSQSGDNDDFKGFASQA). Serine 887 and serine 953 each carry phosphoserine. Basic and acidic residues predominate over residues 963–974 (LGKEKTQKRVKE). Threonine 1032 bears the Phosphothreonine; by MAPK1 or MAPK3 mark. Low complexity predominate over residues 1034 to 1045 (PTSTGGSKSPGS). 2 positions are modified to phosphothreonine: threonine 1051 and threonine 1057. Composition is skewed to low complexity over residues 1078-1094 (SSHS…SSGS) and 1101-1156 (SSSS…PGSS). Serine 1156 carries the post-translational modification Phosphoserine. The segment covering 1162–1195 (GLSSGSSSTKMKPQGKPSSLMNPSLSKPNISPSH) has biased composition (polar residues). Lysine 1177 bears the N6-acetyllysine mark. Serine 1207 is modified (phosphoserine). Residue threonine 1215 is modified to Phosphothreonine. Composition is skewed to low complexity over residues 1218-1227 (SSKAKSPISS) and 1234-1293 (MSGT…SKGK). Position 1223 is a phosphoserine (serine 1223). The interval 1249 to 1421 (LGSSGSLSQK…KPGESSGEGL (173 aa)) is interaction with TP53. At serine 1302 the chain carries Phosphoserine. The segment covering 1330–1345 (GVSTNSSSHPMSSKHN) has biased composition (polar residues). Residue serine 1347 is modified to Phosphoserine. Over residues 1352–1364 (QGKREKSDKDKSK) the composition is skewed to basic and acidic residues. Residues serine 1403 and serine 1433 each carry the phosphoserine modification. Polar residues-rich tracts occupy residues 1425 to 1440 (MASS…SGST) and 1448 to 1482 (PSHS…SPSS). Threonine 1440 carries the post-translational modification Phosphothreonine. Residue threonine 1457 is modified to Phosphothreonine; by MAPK1 or MAPK3. 5 positions are modified to phosphoserine: serine 1463, serine 1465, serine 1479, serine 1481, and serine 1482. Basic residues predominate over residues 1496–1505 (KHKKHKKEKK). Basic and acidic residues predominate over residues 1506-1522 (KVKDKDRDRDRDKDRDK). Lysine 1529 bears the N6-acetyllysine mark. Over residues 1533 to 1552 (WSKSPISSDQSLSMTSNTIL) the composition is skewed to polar residues.

Belongs to the Mediator complex subunit 1 family. In terms of assembly, component of the Mediator complex, which is composed of MED1, MED4, MED6, MED7, MED8, MED9, MED10, MED11, MED12, MED13, MED13L, MED14, MED15, MED16, MED17, MED18, MED19, MED20, MED21, MED22, MED23, MED24, MED25, MED26, MED27, MED29, MED30, MED31, CCNC, CDK8 and CDC2L6/CDK11. The MED12, MED13, CCNC and CDK8 subunits form a distinct module termed the CDK8 module. Mediator containing the CDK8 module is less active than Mediator lacking this module in supporting transcriptional activation. Individual preparations of the Mediator complex lacking one or more distinct subunits have been variously termed ARC, CRSP, DRIP, PC2, SMCC and TRAP. This subunit specifically interacts with a number of nuclear receptors in a ligand-dependent fashion including AR, ESR1, ESR2, PPARA, PPARG, RORA, RXRA, RXRG, THRA, THRB and VDR. Interacts with CTNNB1, GABPA, GLI3, PPARGC1A and TP53. Interacts with YWHAH. Interacts with CLOCK; this interaction requires the presence of THRAP3. Interacts with GATA1 and CCAR1. Interacts with NR4A3. Interacts (via IBM motif) with PSIP1 (via IBD domain); phosphorylation increases its affinity for PSIP1. Interacts with USP22. Post-translationally, phosphorylated by MAPK1 or MAPK3 during G2/M phase which may enhance protein stability and promote entry into the nucleolus. Phosphorylation increases its interaction with PSIP1. Ubiquitously expressed.

It is found in the nucleus. In terms of biological role, component of the Mediator complex, a coactivator involved in the regulated transcription of nearly all RNA polymerase II-dependent genes. Mediator functions as a bridge to convey information from gene-specific regulatory proteins to the basal RNA polymerase II transcription machinery. Mediator is recruited to promoters by direct interactions with regulatory proteins and serves as a scaffold for the assembly of a functional preinitiation complex with RNA polymerase II and the general transcription factors. Acts as a coactivator for GATA1-mediated transcriptional activation during erythroid differentiation of K562 erythroleukemia cells. The chain is Mediator of RNA polymerase II transcription subunit 1 (MED1) from Homo sapiens (Human).